Consider the following 51-residue polypeptide: Large ribosomal subunit protein eL39 (51 aa).

Belongs to the eukaryotic ribosomal protein eL39 family.

The protein is Large ribosomal subunit protein eL39 of Staphylothermus marinus (strain ATCC 43588 / DSM 3639 / JCM 9404 / F1).